Reading from the N-terminus, the 470-residue chain is 3-isopropylmalate dehydratase large subunit (470 aa).

[4Fe-4S] cluster is bound by residues Cys-349, Cys-409, and Cys-412.

It belongs to the aconitase/IPM isomerase family. LeuC type 1 subfamily. In terms of assembly, heterodimer of LeuC and LeuD. [4Fe-4S] cluster is required as a cofactor.

The catalysed reaction is (2R,3S)-3-isopropylmalate = (2S)-2-isopropylmalate. Its pathway is amino-acid biosynthesis; L-leucine biosynthesis; L-leucine from 3-methyl-2-oxobutanoate: step 2/4. Catalyzes the isomerization between 2-isopropylmalate and 3-isopropylmalate, via the formation of 2-isopropylmaleate. The protein is 3-isopropylmalate dehydratase large subunit of Campylobacter jejuni subsp. jejuni serotype O:2 (strain ATCC 700819 / NCTC 11168).